The following is a 95-amino-acid chain: Feather keratin B-4 (95 aa).

N-acetylserine is present on serine 1.

This sequence belongs to the avian keratin family. The avian keratins (F-ker, S-ker, C-ker and B-ker) are a complex mixture of very similar polypeptides.

The chain is Feather keratin B-4 from Columba livia (Rock dove).